A 113-amino-acid polypeptide reads, in one-letter code: Iron-sulfur cluster insertion protein ErpA (113 aa).

Residues cysteine 41, cysteine 105, and cysteine 107 each contribute to the iron-sulfur cluster site.

It belongs to the HesB/IscA family. As to quaternary structure, homodimer. The cofactor is iron-sulfur cluster.

Its function is as follows. Required for insertion of 4Fe-4S clusters for at least IspG. The polypeptide is Iron-sulfur cluster insertion protein ErpA (Mannheimia succiniciproducens (strain KCTC 0769BP / MBEL55E)).